Consider the following 216-residue polypeptide: Ribosomal RNA small subunit methyltransferase G (216 aa).

Residues glycine 86, leucine 91, 137–138, and arginine 155 contribute to the S-adenosyl-L-methionine site; that span reads VE.

This sequence belongs to the methyltransferase superfamily. RNA methyltransferase RsmG family.

The protein localises to the cytoplasm. The catalysed reaction is guanosine(527) in 16S rRNA + S-adenosyl-L-methionine = N(7)-methylguanosine(527) in 16S rRNA + S-adenosyl-L-homocysteine. Functionally, specifically methylates the N7 position of guanine in position 527 of 16S rRNA. This chain is Ribosomal RNA small subunit methyltransferase G, found in Lawsonia intracellularis (strain PHE/MN1-00).